The following is a 256-amino-acid chain: Hydroxyacylglutathione hydrolase (256 aa).

Residues His-55, His-57, Asp-59, His-60, His-113, Asp-130, and His-168 each contribute to the Zn(2+) site.

It belongs to the metallo-beta-lactamase superfamily. Glyoxalase II family. Monomer. Zn(2+) serves as cofactor.

The catalysed reaction is an S-(2-hydroxyacyl)glutathione + H2O = a 2-hydroxy carboxylate + glutathione + H(+). It functions in the pathway secondary metabolite metabolism; methylglyoxal degradation; (R)-lactate from methylglyoxal: step 2/2. Thiolesterase that catalyzes the hydrolysis of S-D-lactoyl-glutathione to form glutathione and D-lactic acid. In Alkalilimnicola ehrlichii (strain ATCC BAA-1101 / DSM 17681 / MLHE-1), this protein is Hydroxyacylglutathione hydrolase.